Reading from the N-terminus, the 114-residue chain is Evasin P1096 (114 aa).

The N-terminal stretch at 1–23 (MELNAFTILHIAVFIAVGYYANT) is a signal peptide. 3 disulfides stabilise this stretch: Cys47–Cys65, Cys51–Cys67, and Cys61–Cys78. Residue Asn50 is glycosylated (N-linked (GlcNAc...) asparagine). The segment at 89-114 (DPSQDPSIDEAAPRESVSKRRSNGES) is disordered. Basic and acidic residues predominate over residues 99–114 (AAPRESVSKRRSNGES).

It is found in the secreted. Its function is as follows. Salivary chemokine-binding protein which binds to host chemokine CXCL8. This chain is Evasin P1096, found in Ixodes ricinus (Common tick).